The sequence spans 154 residues: 6,7-dimethyl-8-ribityllumazine synthase (154 aa).

5-amino-6-(D-ribitylamino)uracil-binding positions include W22, 56-58 (AWE), and 80-82 (CVI). 85 to 86 (DT) is a binding site for (2S)-2-hydroxy-3-oxobutyl phosphate. The active-site Proton donor is the H88. N113 lines the 5-amino-6-(D-ribitylamino)uracil pocket. (2S)-2-hydroxy-3-oxobutyl phosphate is bound at residue R127.

Belongs to the DMRL synthase family. Forms an icosahedral capsid composed of 60 subunits, arranged as a dodecamer of pentamers.

The enzyme catalyses (2S)-2-hydroxy-3-oxobutyl phosphate + 5-amino-6-(D-ribitylamino)uracil = 6,7-dimethyl-8-(1-D-ribityl)lumazine + phosphate + 2 H2O + H(+). It functions in the pathway cofactor biosynthesis; riboflavin biosynthesis; riboflavin from 2-hydroxy-3-oxobutyl phosphate and 5-amino-6-(D-ribitylamino)uracil: step 1/2. In terms of biological role, catalyzes the formation of 6,7-dimethyl-8-ribityllumazine by condensation of 5-amino-6-(D-ribitylamino)uracil with 3,4-dihydroxy-2-butanone 4-phosphate. This is the penultimate step in the biosynthesis of riboflavin. The chain is 6,7-dimethyl-8-ribityllumazine synthase from Xanthomonas axonopodis pv. citri (strain 306).